Consider the following 550-residue polypeptide: MAAKDVIFGGEARARMVEGVNILANAVKVTLGPKGRNVVLERSFGAPTVTKDGVSVAKEIELKDKLQNMGAQMVKEVASKTSDIAGDGTTTATVLAQAIVREGMKYVAAGMNPMDLKRGIDKAVTALVEELKKASKATTTSKEIAQVGSISANSDEAIGKIIADAMDKVGKEGVITVEDGKSLESELDVVEGMQFDRGYLSPYFINNPEKQSAILDNPFVLLYDKKISNIRDLLPTLEQVAKAGRPLLIIAEEVEGEALATLVVNTLRGILKVVAVKAPGFGDRRKAMLEDIACLTGGKVIAEEVGMSLEKVTLADLGTAKRIEVGKENTIIIDGAGEAKDIEARVKQVRVQIEEATSDYDREKLQERVAKLAGGVAVIKVGAATEVEMKEKKARVEDALHATRAAVEEGIVAGGGVALLRAKQAAGAIKGDNADQEAGIKLVLRAIEAPLREIVYNAGGEASVVVNAVLAGKGNYGFNAANDTYGDMIEMGILDPTKVTRTALQNAASVASLMLTTEAMVAEAPKDESGAGGGMPGGMGGMGGMGDMGM.

ATP is bound by residues 30 to 33 (TLGP), K51, 87 to 91 (DGTTT), G415, 479 to 481 (NAA), and D495.

It belongs to the chaperonin (HSP60) family. As to quaternary structure, forms a cylinder of 14 subunits composed of two heptameric rings stacked back-to-back. Interacts with the co-chaperonin GroES.

The protein resides in the cytoplasm. It catalyses the reaction ATP + H2O + a folded polypeptide = ADP + phosphate + an unfolded polypeptide.. Together with its co-chaperonin GroES, plays an essential role in assisting protein folding. The GroEL-GroES system forms a nano-cage that allows encapsulation of the non-native substrate proteins and provides a physical environment optimized to promote and accelerate protein folding. In Polaromonas sp. (strain JS666 / ATCC BAA-500), this protein is Chaperonin GroEL.